The chain runs to 213 residues: Uridine kinase (213 aa).

ATP is bound at residue 15–22 (GASASGKS).

This sequence belongs to the uridine kinase family.

The protein localises to the cytoplasm. It catalyses the reaction uridine + ATP = UMP + ADP + H(+). It carries out the reaction cytidine + ATP = CMP + ADP + H(+). The protein operates within pyrimidine metabolism; CTP biosynthesis via salvage pathway; CTP from cytidine: step 1/3. It participates in pyrimidine metabolism; UMP biosynthesis via salvage pathway; UMP from uridine: step 1/1. The sequence is that of Uridine kinase from Pectobacterium carotovorum subsp. carotovorum (strain PC1).